We begin with the raw amino-acid sequence, 265 residues long: Chlorophyll a-b binding protein 1C, chloroplastic (265 aa).

The N-terminal 34 residues, 1–34, are a transit peptide targeting the chloroplast; it reads MAAATMALSSPSFAGQAVKLSPSASEISGNGRIT. Residues 151 to 171 traverse the membrane as a helical segment; sequence LVHAQSILAIWACQVVLMGAV. Positions 152, 156, 164, 172, 175, and 181 each coordinate chlorophyll b. Chlorophyll a is bound by residues Lys212, Glu213, Asn216, Arg218, Gln230, His245, and Ala254. A helical transmembrane segment spans residues 219–239; it reads LAMFSMFGFFVQAIVTGKGPL. Phe261 contacts chlorophyll b.

Belongs to the light-harvesting chlorophyll a/b-binding (LHC) protein family. In terms of assembly, the LHC complex consists of chlorophyll a-b binding proteins. It depends on Binds at least 14 chlorophylls (8 Chl-a and 6 Chl-b) and carotenoids such as lutein and neoxanthin. as a cofactor. Post-translationally, photoregulated by reversible phosphorylation of its threonine residues.

The protein localises to the plastid. It localises to the chloroplast thylakoid membrane. In terms of biological role, the light-harvesting complex (LHC) functions as a light receptor, it captures and delivers excitation energy to photosystems with which it is closely associated. The protein is Chlorophyll a-b binding protein 1C, chloroplastic (CAB1C) of Solanum lycopersicum (Tomato).